Consider the following 2776-residue polypeptide: A-kinase anchor protein 13 (2776 aa).

Disordered stretches follow at residues 371–401 (KNKD…SCLQ), 452–518 (EPDA…TETT), 547–584 (PAEA…QSSP), 618–641 (TMPG…PAQS), 653–689 (EAGT…ESTM), 760–871 (VSQT…SPTA), 910–951 (ALGQ…IPGL), 995–1029 (GAAK…LPSG), 1431–1508 (LCDT…MDSI), 1527–1546 (PFRR…AEMN), and 1565–1603 (RRSF…FGGE). Positions 389-401 (DSGSASHQDSCLQ) are enriched in polar residues. The interval 493 to 515 (QNNKPQVGEGTKERLENSDSSTT) is important for interaction with PRKAR2A. A compositionally biased stretch (basic and acidic residues) spans 560-573 (PTEKPGMETQERGC). Polar residues predominate over residues 659–672 (AEATHQPSTVTSSG). The segment covering 773–788 (SPPASSFSLASSPESE) has biased composition (low complexity). Ser-784 carries the post-translational modification Phosphoserine. Thr-809 carries the post-translational modification Phosphothreonine. Composition is skewed to basic and acidic residues over residues 820 to 834 (DGPD…DKVG) and 914 to 940 (DGKD…EDQR). A Phosphothreonine modification is found at Thr-941. A compositionally biased stretch (polar residues) spans 1005–1020 (TSLSADSKQKASSTEQ). Residues 1433–1444 (DTTGSSSSTDDT) are compositionally biased toward low complexity. Over residues 1454 to 1476 (GSDVSLPQTSKLNRSRNHQSANG) the composition is skewed to polar residues. Ser-1455, Ser-1473, Ser-1507, Ser-1532, and Ser-1569 each carry phosphoserine. Residues 1552–1678 (RALGHVVRRP…SRPFHSTSAN (127 aa)) form an important for interaction with MAP2K3 region. A compositionally biased stretch (low complexity) spans 1583-1594 (SSSLEMSSANSS). A phosphoserine mark is found at Ser-1608, Ser-1611, and Ser-1613. N6-methyllysine is present on Lys-1637. The segment at 1711 to 1756 (TFSYIRNKMSSSKKSKEKEKEKDKIKEKEKDSKEKEKDKKTLNGHT) is disordered. Residues 1724–1751 (KSKEKEKEKDKIKEKEKDSKEKEKDKKT) show a composition bias toward basic and acidic residues. The Phorbol-ester/DAG-type zinc finger occupies 1754–1801 (GHTFSPIPIVGPISCSQCMKPFTNKDAYTCAGCGAFVHKGCRENLASC). Phosphoserine occurs at positions 1839, 1858, and 1892. Positions 1882-2776 (MSNTWKFLSH…VPAEGEEIFC (895 aa)) are interaction with ESR1. Position 1893 is a phosphothreonine (Thr-1893). Phosphoserine is present on residues Ser-1895 and Ser-1908. In terms of domain architecture, DH spans 1957–2154 (KRQEVIYELM…KDVIGAVDSK (198 aa)). The PH domain occupies 2194-2296 (KLVRDGSVFL…WIQIIQDTIN (103 aa)). Ser-2308 and Ser-2361 each carry phosphoserine. Residues 2308–2345 (SENEEEKKLLDTKARELKEQLQQKDQQILLLLEEKEMI) are a coiled coil. At Thr-2431 the chain carries Phosphothreonine. The segment at 2436 to 2471 (DCHQMNASKGGEKEEGDDGQDLRRTESDSGLKKGGN) is disordered. Residues 2455 to 2466 (QDLRRTESDSGL) show a composition bias toward basic and acidic residues. 2 positions are modified to phosphoserine: Ser-2527 and Ser-2530. Residues 2532 to 2646 (LIEQEKQRSL…ERLSQRQMDQ (115 aa)) adopt a coiled-coil conformation. 2 disordered regions span residues 2549–2605 (ANLQ…EELQ) and 2626–2776 (EREQ…EIFC). Composition is skewed to basic and acidic residues over residues 2558 to 2605 (HLEE…EELQ) and 2626 to 2640 (EREQ…ERLS). Polar residues-rich tracts occupy residues 2641 to 2653 (QRQM…QVSN), 2665 to 2700 (LPNS…SISR), and 2713 to 2727 (SASQ…SQAP). Phosphoserine occurs at positions 2673 and 2692.

As to quaternary structure, interacts with the cAMP-dependent protein kinase (PKA) holoenzyme and with the regulatory subunit PRKAR2A. Interacts with RHOA. Also interacts with RHOB and RHOC. Identified in a ternary complex with RHOA and PRKAR2A. Identified in a complex with NR3C1 and RHOA. Interacts with BRAF and KSR1. Identified in a complex with BRAF and KSR1. Component of a signaling complex containing at least AKAP13, PKN1, MAPK14, ZAK and MAP2K3. Within this complex, AKAP13 interacts directly with PKN1, which in turn recruits MAPK14, MAP2K3 and ZAK. Interacts (phosphorylated form) with YWHAB and YWHAZ. Interaction with YWHAB inhibits activation of RHOA, interferes with PKN1 binding and activation of MAP kinases. Interacts with GNA12. Interacts with IKBKB. Interacts with ESR1, THRA, PPARA and NME2. Interacts (via the C-terminal domain after the PH domain) with MEF2C and RXRB. Interacts (via the C-terminal domain after the PH domain) with PRKD1. In terms of tissue distribution, detected in embryonic heart, limb bud, first branchial arch and forebrain (at protein level). Detected in heart. Detected in perichondrium, but not in the bone growth plate.

Its subcellular location is the cytoplasm. The protein resides in the cytosol. It localises to the cell cortex. It is found in the cytoskeleton. The protein localises to the nucleus. Its subcellular location is the membrane. Scaffold protein that plays an important role in assembling signaling complexes downstream of several types of G protein-coupled receptors. Activates RHOA in response to signaling via G protein-coupled receptors via its function as Rho guanine nucleotide exchange factor. May also activate other Rho family members. Part of a kinase signaling complex that links ADRA1A and ADRA1B adrenergic receptor signaling to the activation of downstream p38 MAP kinases, such as MAPK11 and MAPK14. Part of a signaling complex that links ADRA1B signaling to the activation of RHOA and IKBKB/IKKB, leading to increased NF-kappa-B transcriptional activity. Part of a RHOA-dependent signaling cascade that mediates responses to lysophosphatidic acid (LPA), a signaling molecule that activates G-protein coupled receptors and potentiates transcriptional activation of the glucocorticoid receptor NR3C1. Part of a signaling cascade that stimulates MEF2C-dependent gene expression in response to lysophosphatidic acid (LPA). Part of a signaling pathway that activates MAPK11 and/or MAPK14 and leads to increased transcription activation of the estrogen receptors ESR1 and ESR2. Part of a signaling cascade that links cAMP and EGFR signaling to BRAF signaling and to PKA-mediated phosphorylation of KSR1, leading to the activation of downstream MAP kinases, such as MAPK1 or MAPK3. Functions as a scaffold protein that anchors cAMP-dependent protein kinase (PKA) and PRKD1. This promotes activation of PRKD1, leading to increased phosphorylation of HDAC5 and ultimately cardiomyocyte hypertrophy. Has no guanine nucleotide exchange activity on CDC42, Ras or Rac. Required for normal embryonic heart development, and in particular for normal sarcomere formation in the developing cardiomyocytes. Plays a role in cardiomyocyte growth and cardiac hypertrophy in response to activation of the beta-adrenergic receptor by phenylephrine or isoproterenol. Required for normal adaptive cardiac hypertrophy in response to pressure overload. Plays a role in osteogenesis. This Mus musculus (Mouse) protein is A-kinase anchor protein 13.